A 180-amino-acid chain; its full sequence is ATP-dependent protease subunit HslV (180 aa).

Thr-6 is a catalytic residue. Na(+)-binding residues include Ala-164, Cys-167, and Thr-170.

This sequence belongs to the peptidase T1B family. HslV subfamily. A double ring-shaped homohexamer of HslV is capped on each side by a ring-shaped HslU homohexamer. The assembly of the HslU/HslV complex is dependent on binding of ATP.

It localises to the cytoplasm. The enzyme catalyses ATP-dependent cleavage of peptide bonds with broad specificity.. Allosterically activated by HslU binding. Its function is as follows. Protease subunit of a proteasome-like degradation complex believed to be a general protein degrading machinery. The sequence is that of ATP-dependent protease subunit HslV from Borrelia hermsii (strain HS1 / DAH).